We begin with the raw amino-acid sequence, 95 residues long: Large ribosomal subunit protein bL25 (95 aa).

It belongs to the bacterial ribosomal protein bL25 family. In terms of assembly, part of the 50S ribosomal subunit; part of the 5S rRNA/L5/L18/L25 subcomplex. Contacts the 5S rRNA. Binds to the 5S rRNA independently of L5 and L18.

This is one of the proteins that binds to the 5S RNA in the ribosome where it forms part of the central protuberance. The sequence is that of Large ribosomal subunit protein bL25 from Actinobacillus pleuropneumoniae serotype 5b (strain L20).